A 306-amino-acid polypeptide reads, in one-letter code: Probable dimethyladenosine transferase (306 aa).

Residues histidine 30, leucine 32, glycine 57, glutamate 78, aspartate 106, and asparagine 121 each contribute to the S-adenosyl-L-methionine site.

This sequence belongs to the class I-like SAM-binding methyltransferase superfamily. rRNA adenine N(6)-methyltransferase family. In terms of assembly, part of the small subunit (SSU) processome, composed of more than 70 proteins and the RNA chaperone small nucleolar RNA (snoRNA) U3.

It localises to the nucleus. The protein localises to the nucleolus. It carries out the reaction adenosine(1779)/adenosine(1780) in 18S rRNA + 4 S-adenosyl-L-methionine = N(6)-dimethyladenosine(1779)/N(6)-dimethyladenosine(1780) in 18S rRNA + 4 S-adenosyl-L-homocysteine + 4 H(+). Its function is as follows. Specifically dimethylates two adjacent adenosines in the loop of a conserved hairpin near the 3'-end of 18S rRNA in the 40S particle. Involved in the pre-rRNA processing steps leading to small-subunit rRNA production independently of its RNA-modifying catalytic activity. Part of the small subunit (SSU) processome, first precursor of the small eukaryotic ribosomal subunit. During the assembly of the SSU processome in the nucleolus, many ribosome biogenesis factors, an RNA chaperone and ribosomal proteins associate with the nascent pre-rRNA and work in concert to generate RNA folding, modifications, rearrangements and cleavage as well as targeted degradation of pre-ribosomal RNA by the RNA exosome. The sequence is that of Probable dimethyladenosine transferase from Drosophila melanogaster (Fruit fly).